Reading from the N-terminus, the 222-residue chain is Charged multivesicular body protein 3 (222 aa).

The N-myristoyl glycine moiety is linked to residue Gly-2. The tract at residues 2–113 (GLFGKTQEKP…LQKSTEVMKA (112 aa)) is intramolecular interaction with C-terminus. Positions 22-54 (KIRKEMRVVDRQIRDIQREEEKVKRSVKDAAKK) form a coiled coil. Important for autoinhibitory function stretches follow at residues 59–64 (VCVVLA) and 168–169 (IL). The stretch at 149 to 222 (ESMDDQEEME…MQSRLATLRS (74 aa)) forms a coiled coil. The segment at 151–220 (MDDQEEMEEA…EAMQSRLATL (70 aa)) is intramolecular interaction with N-terminus. Residues 151-222 (MDDQEEMEEA…MQSRLATLRS (72 aa)) are interaction with VPS4A. Lys-179 participates in a covalent cross-link: Glycyl lysine isopeptide (Lys-Gly) (interchain with G-Cter in ubiquitin). The tract at residues 180–222 (APSKVTDALPEPEPLGAMAASEDEEEEEEALEAMQSRLATLRS) is disordered. Interaction with STAMBP regions lie at residues 196 to 222 (AMAA…TLRS), 203 to 207 (EEEEE), and 221 to 222 (RS). Ser-200 carries the post-translational modification Phosphoserine. The span at 200–210 (SEDEEEEEEAL) shows a compositional bias: acidic residues. An MIT-interacting motif motif is present at residues 201-211 (EDEEEEEEALE).

It belongs to the SNF7 family. In terms of assembly, probable core component of the endosomal sorting required for transport complex III (ESCRT-III). ESCRT-III components are thought to multimerize to form a flat lattice on the perimeter membrane of the endosome. Several assembly forms of ESCRT-III may exist that interact and act sequentially. Forms a metastable monomer in solution; its core structure (without part of the putative autoinhibitory C-terminal acidic region) oligomerizes into a flat lattice via two different dimerization interfaces. In vitro, heteromerizes with CHMP2A (but not CHMP4) to form helical tubular structures that expose membrane-interacting sites on the outside whereas VPS4B can associate on the inside of the tubule. May interact with IGFBP7; the relevance of such interaction however remains unclear. Interacts with CHMP2A. Interacts with CHMP4A; the interaction requires the release of CHMP4A autoinhibition. Interacts with VPS4A. Interacts with STAMBP; the interaction appears to relieve the autoinhibition of CHMP3. Interacts with VTA1.

Its subcellular location is the cytoplasm. The protein localises to the cytosol. It localises to the membrane. The protein resides in the endosome. It is found in the late endosome membrane. In terms of biological role, probable core component of the endosomal sorting required for transport complex III (ESCRT-III) which is involved in multivesicular bodies (MVBs) formation and sorting of endosomal cargo proteins into MVBs. MVBs contain intraluminal vesicles (ILVs) that are generated by invagination and scission from the limiting membrane of the endosome and mostly are delivered to lysosomes enabling degradation of membrane proteins, such as stimulated growth factor receptors, lysosomal enzymes and lipids. The MVB pathway appears to require the sequential function of ESCRT-O, -I,-II and -III complexes. ESCRT-III proteins mostly dissociate from the invaginating membrane before the ILV is released. The ESCRT machinery also functions in topologically equivalent membrane fission events, such as the terminal stages of cytokinesis and the budding of enveloped viruses (lentiviruses). ESCRT-III proteins are believed to mediate the necessary vesicle extrusion and/or membrane fission activities, possibly in conjunction with the AAA ATPase VPS4. Selectively binds to phosphatidylinositol 3,5-bisphosphate PtdIns(3,5)P2 and PtdIns(3,4)P2 in preference to other phosphoinositides tested. Involved in late stages of cytokinesis. Plays a role in endosomal sorting/trafficking of EGF receptor. This chain is Charged multivesicular body protein 3 (CHMP3), found in Bos taurus (Bovine).